The sequence spans 160 residues: Ureidoglycolate lyase (160 aa).

Belongs to the ureidoglycolate lyase family. As to quaternary structure, homodimer. The cofactor is Ni(2+).

It catalyses the reaction (S)-ureidoglycolate = urea + glyoxylate. Its pathway is nitrogen metabolism; (S)-allantoin degradation. Catalyzes the catabolism of the allantoin degradation intermediate (S)-ureidoglycolate, generating urea and glyoxylate. Involved in the anaerobic utilization of allantoin as sole nitrogen source. Reinforces the induction of genes involved in the degradation of allantoin and glyoxylate by producing glyoxylate. The protein is Ureidoglycolate lyase of Shigella flexneri serotype 5b (strain 8401).